Here is a 252-residue protein sequence, read N- to C-terminus: uncharacterized protein (252 aa).

The N-terminal stretch at 1 to 25 (MRKKKFLSRFAFGSLFLLCGTILSA) is a signal peptide. C26 carries the N-palmitoyl cysteine lipid modification. C26 is lipidated: S-diacylglycerol cysteine.

This sequence belongs to the MG439/MG440 family.

Its subcellular location is the cell membrane. This is an uncharacterized protein from Mycoplasma pneumoniae (strain ATCC 29342 / M129 / Subtype 1) (Mycoplasmoides pneumoniae).